Here is a 551-residue protein sequence, read N- to C-terminus: MKTRHWSVLSLLALPALSQAEAITGEVHRQPLNIEAIVMFVLFVGATLYITYWASKRTRSRGDYYTAGGRITGFQNGLAIAGDFMSAASFLGISALVYTSGYDGLIYSIGFLIGWPIILFLIAERLRNLGRYTFADVASYRLKQRPIRTLSACGSLVVVALYLIAQMVGAGKLIELLFGLNYHVAVVLVGILMVMYVLFGGMLATTWVQIIKAVLLLAGASFMALMVMKSVNFNFNTLFSEAVKVHPKGLSIMSPGGLVSDPISALSLGLALMFGTAGLPHILMRFFTVSDAKEARKSVFYATGFIGYFYILTFIIGFGAILLVGPNPAFKDAAGALLGGNNMAAVHLADAVGGSFFLGFISAVAFATILAVVAGLTLAGASAVSHDLYASVIKKGKANERDELKVSKITVVVLGFVAIGLGILFEKQNIAFMVGLAFSIAASCNFPIIFISMYWEKLTTRGAMIGGWLGLLTAVILMILGPTIWVTILGHAKPIYPYEYPALFSMIVAFVGIWFFSITDNSEEGQQERLRFKAQFVRSQTGLGASQSSSH.

13 helical membrane-spanning segments follow: residues 34 to 54, 77 to 97, 104 to 124, 150 to 170, 184 to 204, 207 to 227, 263 to 283, 304 to 324, 356 to 376, 406 to 426, 430 to 450, 469 to 489, and 498 to 518; these read IEAI…TYWA, GLAI…SALV, GLIY…LIAE, LSAC…MVGA, VAVV…GMLA, WVQI…ALMV, ISAL…PHIL, GFIG…ILLV, FFLG…VAGL, VSKI…ILFE, IAFM…PIIF, LGLL…VTIL, and YEYP…FFSI.

It belongs to the sodium:solute symporter (SSF) (TC 2.A.21) family.

The protein resides in the cell inner membrane. Transports acetate. This is Cation/acetate symporter ActP from Yersinia enterocolitica serotype O:8 / biotype 1B (strain NCTC 13174 / 8081).